Here is a 361-residue protein sequence, read N- to C-terminus: Phosphoserine aminotransferase (361 aa).

Arg-43 lines the L-glutamate pocket. Residues 77-78, Trp-103, Thr-153, Asp-173, and Gln-196 each bind pyridoxal 5'-phosphate; that span reads AS. N6-(pyridoxal phosphate)lysine is present on Lys-197. A pyridoxal 5'-phosphate-binding site is contributed by 238–239; that stretch reads NT.

It belongs to the class-V pyridoxal-phosphate-dependent aminotransferase family. SerC subfamily. As to quaternary structure, homodimer. It depends on pyridoxal 5'-phosphate as a cofactor.

The protein resides in the cytoplasm. It carries out the reaction O-phospho-L-serine + 2-oxoglutarate = 3-phosphooxypyruvate + L-glutamate. The enzyme catalyses 4-(phosphooxy)-L-threonine + 2-oxoglutarate = (R)-3-hydroxy-2-oxo-4-phosphooxybutanoate + L-glutamate. Its pathway is amino-acid biosynthesis; L-serine biosynthesis; L-serine from 3-phospho-D-glycerate: step 2/3. It participates in cofactor biosynthesis; pyridoxine 5'-phosphate biosynthesis; pyridoxine 5'-phosphate from D-erythrose 4-phosphate: step 3/5. Catalyzes the reversible conversion of 3-phosphohydroxypyruvate to phosphoserine and of 3-hydroxy-2-oxo-4-phosphonooxybutanoate to phosphohydroxythreonine. In Stutzerimonas stutzeri (Pseudomonas stutzeri), this protein is Phosphoserine aminotransferase.